Here is a 234-residue protein sequence, read N- to C-terminus: Uridylate kinase (234 aa).

9 to 10 (GS) serves as a coordination point for ATP. Glycine 43 lines the UMP pocket. The ATP site is built by glycine 44 and arginine 48. UMP is bound by residues aspartate 65 and 113–119 (VIPGQTT). Positions 139, 145, and 148 each coordinate ATP.

This sequence belongs to the UMP kinase family. As to quaternary structure, homohexamer.

The protein localises to the cytoplasm. It catalyses the reaction UMP + ATP = UDP + ADP. Its pathway is pyrimidine metabolism; CTP biosynthesis via de novo pathway; UDP from UMP (UMPK route): step 1/1. Its activity is regulated as follows. Inhibited by UTP. Its function is as follows. Catalyzes the reversible phosphorylation of UMP to UDP. This chain is Uridylate kinase, found in Methanococcoides burtonii (strain DSM 6242 / NBRC 107633 / OCM 468 / ACE-M).